Consider the following 925-residue polypeptide: Isoleucine--tRNA ligase (925 aa).

The short motif at 57 to 67 (PYANGDIHIGH) is the 'HIGH' region element. L-isoleucyl-5'-AMP is bound at residue E553. The 'KMSKS' region motif lies at 594 to 598 (KMSKS). K597 contributes to the ATP binding site. Zn(2+)-binding residues include C889, C892, C909, and C912.

The protein belongs to the class-I aminoacyl-tRNA synthetase family. IleS type 1 subfamily. Monomer. The cofactor is Zn(2+).

The protein resides in the cytoplasm. It carries out the reaction tRNA(Ile) + L-isoleucine + ATP = L-isoleucyl-tRNA(Ile) + AMP + diphosphate. Functionally, catalyzes the attachment of isoleucine to tRNA(Ile). As IleRS can inadvertently accommodate and process structurally similar amino acids such as valine, to avoid such errors it has two additional distinct tRNA(Ile)-dependent editing activities. One activity is designated as 'pretransfer' editing and involves the hydrolysis of activated Val-AMP. The other activity is designated 'posttransfer' editing and involves deacylation of mischarged Val-tRNA(Ile). The protein is Isoleucine--tRNA ligase of Brevibacillus brevis (strain 47 / JCM 6285 / NBRC 100599).